Reading from the N-terminus, the 116-residue chain is Somatostatin (116 aa).

The first 24 residues, 1 to 24, serve as a signal peptide directing secretion; it reads MLSCRLQCALAALSIVLALGCVTG. The propeptide occupies 25–88; it reads APSDPRLRQF…QDEMRLELQR (64 aa). A43 is modified (alanine amide). The tract at residues 62–82 is disordered; sequence QTENDALEPEDLSQAAEQDEM. An intrachain disulfide couples C105 to C116.

The protein belongs to the somatostatin family. Post-translationally, C-terminal amidation of the neuronostatin peptide is required for its biological activity, including for the regulation of mean arterial pressure.

It localises to the secreted. Its function is as follows. Inhibits the secretion of pituitary hormones, including that of growth hormone/somatotropin (GH1), PRL, ACTH, luteinizing hormone (LH) and TSH. Also impairs ghrelin- and GnRH-stimulated secretion of GH1 and LH; the inhibition of ghrelin-stimulated secretion of GH1 can be further increased by neuronostatin. May enhance low-glucose-induced glucagon release by pancreatic alpha cells. This effect may be mediated by binding to GPR107 and PKA activation. May regulate cardiac contractile function. May compromise cardiomyocyte viability. In the central nervous system, may impair memory retention and may affect hippocampal excitability. May also have anxiolytic and anorexigenic effects. May play a role in arterial pressure regulation. May inhibit basal, but not ghrelin- or GnRH-stimulated secretion of GH1 or LH, but does not affect the release of other pituitary hormones, including PRL, ACTH, FSH or TSH. Potentiates inhibitory action of somatostatin on ghrelin-stimulated secretion of GH1, but not that on GnRH-stimulated secretion of LH. The protein is Somatostatin (SST) of Homo sapiens (Human).